The chain runs to 2168 residues: Bromodomain adjacent to zinc finger domain protein 2B (2168 aa).

Disordered stretches follow at residues methionine 1–valine 29, phenylalanine 140–glutamine 348, leucine 409–arginine 428, serine 459–histidine 479, serine 528–alanine 698, glycine 719–threonine 740, methionine 841–valine 872, and arginine 1021–glutamate 1043. Residues proline 8 to valine 29 are compositionally biased toward low complexity. Polar residues-rich tracts occupy residues asparagine 146–asparagine 163 and glycine 171–alanine 193. Composition is skewed to low complexity over residues serine 194 to serine 204 and glutamate 240 to serine 263. The span at aspartate 264–serine 291 shows a compositional bias: acidic residues. Positions serine 307–isoleucine 325 are enriched in basic and acidic residues. Over residues serine 335–glutamine 348 the composition is skewed to low complexity. Polar residues-rich tracts occupy residues proline 461–histidine 479 and serine 528–valine 551. Residues arginine 592–glutamate 605 are compositionally biased toward basic and acidic residues. Residues aspartate 606–threonine 663 are compositionally biased toward acidic residues. Polar residues predominate over residues methionine 670–arginine 693. Residues threonine 720 to glycine 732 are compositionally biased toward low complexity. An MBD domain is found at valine 739 to arginine 810. The span at methionine 841–arginine 861 shows a compositional bias: basic and acidic residues. Residues alanine 883–lysine 1061 adopt a coiled-coil conformation. The DDT domain maps to glycine 1087–leucine 1152. The segment at lysine 1265–alanine 1341 is disordered. Positions serine 1297–lysine 1321 are enriched in acidic residues. Basic and acidic residues predominate over residues glutamate 1322–isoleucine 1331. Positions aspartate 1334–valine 1375 form a coiled coil. Lysine 1425 participates in a covalent cross-link: Glycyl lysine isopeptide (Lys-Gly) (interchain with G-Cter in SUMO2). N6-acetyllysine is present on lysine 1462. 2 positions are modified to phosphoserine: serine 1465 and serine 1467. Residues serine 1503–serine 1533 show a composition bias toward polar residues. Disordered stretches follow at residues serine 1503–proline 1542, serine 1582–glutamine 1607, and threonine 1670–alanine 1694. A compositionally biased stretch (pro residues) spans serine 1588–alanine 1600. A compositionally biased stretch (polar residues) spans threonine 1670 to glutamine 1692. Serine 1680 carries the post-translational modification Phosphoserine. The segment at lysine 1931–lysine 1981 adopts a PHD-type zinc-finger fold. The disordered stretch occupies residues lysine 1998 to glutamate 2040. Threonine 2014 is modified (phosphothreonine). At serine 2019 the chain carries Phosphoserine. The span at glycine 2029–glutamate 2040 shows a compositional bias: basic and acidic residues. The Bromo domain occupies arginine 2060–threonine 2164.

It belongs to the WAL family. In terms of assembly, component of the BRF-1 ISWI chromatin remodeling complex, at least composed of SMARCA1 and BAZ2B, which regulates the spacing of histone octamers on the DNA template to facilitate access to DNA. Within the BRF-1 ISWI chromatin remodeling complex interacts with SMARCA1; the interaction is direct. Component of the BRF-5 ISWI chromatin remodeling complex, at least composed of SMARCA5/SNF2H and BAZ2B, which regulates the spacing of histone octamers on the DNA template to facilitate access to DNA. Within the BRF-5 ISWI chromatin remodeling complex interacts with SMARCA5/SNF2H; the interaction is direct. Interacts with acetylated lysine residues on histone H1.4, H2A, H2B, H3 and H4 (in vitro). Interacts with EHMT1. Expressed at varying levels in several tissues, whereas a smaller transcript was expressed specifically in testis.

The protein localises to the nucleus. Functionally, regulatory subunit of the ATP-dependent BRF-1 and BRF-5 ISWI chromatin remodeling complexes, which form ordered nucleosome arrays on chromatin and facilitate access to DNA during DNA-templated processes such as DNA replication, transcription, and repair. Both complexes regulate the spacing of nucleosomes along the chromatin and have the ability to slide mononucleosomes to the center of a DNA template. The BRF-1 ISWI chromatin remodeling complex has a lower ATP hydrolysis rate than the BRF-5 ISWI chromatin remodeling complex. Chromatin reader protein, which may play a role in transcriptional regulation via interaction with ISWI. Involved in positively modulating the rate of age-related behavioral deterioration. Represses the expression of mitochondrial function-related genes, perhaps by occupying their promoter regions, working in concert with histone methyltransferase EHMT1. The protein is Bromodomain adjacent to zinc finger domain protein 2B (BAZ2B) of Homo sapiens (Human).